The sequence spans 271 residues: MLKIADTTFTSRLFTGTGKFSSPELMLEALRASGSQLITMAMKRVDLQSGNDAILAPLRQLGVRLLPNTSGAKTAEEAIFAARLAREALNTHWVKLEIHPDVRYLLPDPIETLKAAEVLVKEGFVVLPYCGADPVLCKRLEEVGCAAVMPLGSPIGSNLGLRTRDFLQIIIEQSKVPVVVDAGIGAPSHALEALELGADAVLVNTAIAVAHSPVQMAHAFRLAVESGERARLAGLGASPFNPSQPDTLQLRATATSPLTGFLSQLEEQDHV.

The Schiff-base intermediate with DXP role is filled by K95. Residues G156, 182–183 (AG), and 204–205 (NT) contribute to the 1-deoxy-D-xylulose 5-phosphate site.

Belongs to the ThiG family. Homotetramer. Forms heterodimers with either ThiH or ThiS.

The protein resides in the cytoplasm. The catalysed reaction is [ThiS sulfur-carrier protein]-C-terminal-Gly-aminoethanethioate + 2-iminoacetate + 1-deoxy-D-xylulose 5-phosphate = [ThiS sulfur-carrier protein]-C-terminal Gly-Gly + 2-[(2R,5Z)-2-carboxy-4-methylthiazol-5(2H)-ylidene]ethyl phosphate + 2 H2O + H(+). It functions in the pathway cofactor biosynthesis; thiamine diphosphate biosynthesis. Catalyzes the rearrangement of 1-deoxy-D-xylulose 5-phosphate (DXP) to produce the thiazole phosphate moiety of thiamine. Sulfur is provided by the thiocarboxylate moiety of the carrier protein ThiS. In vitro, sulfur can be provided by H(2)S. In Yersinia pseudotuberculosis serotype O:1b (strain IP 31758), this protein is Thiazole synthase.